The primary structure comprises 342 residues: S-adenosylmethionine:tRNA ribosyltransferase-isomerase (342 aa).

This sequence belongs to the QueA family. As to quaternary structure, monomer.

It localises to the cytoplasm. It carries out the reaction 7-aminomethyl-7-carbaguanosine(34) in tRNA + S-adenosyl-L-methionine = epoxyqueuosine(34) in tRNA + adenine + L-methionine + 2 H(+). It participates in tRNA modification; tRNA-queuosine biosynthesis. Transfers and isomerizes the ribose moiety from AdoMet to the 7-aminomethyl group of 7-deazaguanine (preQ1-tRNA) to give epoxyqueuosine (oQ-tRNA). This Streptococcus pneumoniae serotype 4 (strain ATCC BAA-334 / TIGR4) protein is S-adenosylmethionine:tRNA ribosyltransferase-isomerase.